The chain runs to 284 residues: Gap junction beta-1 protein (284 aa).

The Cytoplasmic segment spans residues 1 to 22; sequence MNWTGLYTLLSGVNRHSTAIGR. Residues 23–45 form a helical membrane-spanning segment; it reads VWLSVIFIFRIMVLVVAAESVWG. Topologically, residues 46-75 are extracellular; that stretch reads DEKSSFICNTLQPGCNSVCYDHFFPISHVR. Residues 76-95 traverse the membrane as a helical segment; the sequence is LWSLQLILVSTPALLVAMHV. Over 96–130 the chain is Cytoplasmic; the sequence is AHQQHIEKKMLRLEGHGDPLHLEEVKRHKVHISGT. The chain crosses the membrane as a helical span at residues 131-153; that stretch reads LWWTYVISVVFRLLFEAAFMYVF. Topologically, residues 154-191 are extracellular; that stretch reads YLLYPGYAMVRLVKCDAYPCPNTVDCFVSRPTEKTIFT. A helical membrane pass occupies residues 192–214; the sequence is VFMLAASGICIILNVAEVVYLIF. Topologically, residues 215 to 284 are cytoplasmic; it reads RACARRAQRR…AEKSDRCSAC (70 aa). Phosphoserine is present on residues serine 233, serine 259, serine 267, and serine 278.

The protein belongs to the connexin family. Beta-type (group I) subfamily. A connexon is composed of a hexamer of connexins. Interacts with CNST.

Its subcellular location is the cell membrane. The protein localises to the cell junction. The protein resides in the gap junction. Functionally, one gap junction consists of a cluster of closely packed pairs of transmembrane channels, the connexons, through which materials of low MW diffuse from one cell to a neighboring cell. This is Gap junction beta-1 protein (GJB1) from Bos taurus (Bovine).